The sequence spans 328 residues: MRTRHGAFLLLARPATERAHTPEQDQYTLPTLTHLDRLEAESLHILREVAAECEKPVMLYSIGKDSAVMLHLAMKAFYPARPPFPLLHVDTGWKFREMIAFRDRKVKELGLELLVHMNEDGVREGVGPFTHGSAYHTDVMKTAALKQALDKYGFDAAFGGARRDEEKSRAKERVISFRSAGHRWDPKRQRPEIWNLYNTRMHKGESLRAFPLSNWTELDIWQYIRREGIELVPLYLAAPRPVVTWNDTLIMVDDDRVPAEIAAKAEVKSVRFRTLGCYPLTGAVESTATTLDDVIQEILLTTTSERQGRAIDKDQTASMEKKKQEGYF.

A disordered region spans residues 309–328; sequence RAIDKDQTASMEKKKQEGYF.

Belongs to the PAPS reductase family. CysD subfamily. As to quaternary structure, heterodimer composed of CysD, the smaller subunit, and CysN.

The enzyme catalyses sulfate + ATP + H(+) = adenosine 5'-phosphosulfate + diphosphate. It participates in sulfur metabolism; hydrogen sulfide biosynthesis; sulfite from sulfate: step 1/3. Its function is as follows. With CysN forms the ATP sulfurylase (ATPS) that catalyzes the adenylation of sulfate producing adenosine 5'-phosphosulfate (APS) and diphosphate, the first enzymatic step in sulfur assimilation pathway. APS synthesis involves the formation of a high-energy phosphoric-sulfuric acid anhydride bond driven by GTP hydrolysis by CysN coupled to ATP hydrolysis by CysD. The sequence is that of Sulfate adenylyltransferase subunit 2 from Hyphomonas neptunium (strain ATCC 15444).